A 174-amino-acid polypeptide reads, in one-letter code: Large ribosomal subunit protein uL6 (174 aa).

It belongs to the universal ribosomal protein uL6 family. Part of the 50S ribosomal subunit.

Functionally, this protein binds to the 23S rRNA, and is important in its secondary structure. It is located near the subunit interface in the base of the L7/L12 stalk, and near the tRNA binding site of the peptidyltransferase center. In Stenotrophomonas maltophilia (strain R551-3), this protein is Large ribosomal subunit protein uL6.